Here is a 241-residue protein sequence, read N- to C-terminus: Copper transport protein CTR3 (241 aa).

The Lumenal portion of the chain corresponds to 1 to 41 (MNMGGSSSTAAKKATCKISMLWNWYTIDTCFIARSWRNDTK). The helical transmembrane segment at 42–62 (GKFAGSCIGCFALVVVAQWLT) threads the bilayer. The Cytoplasmic portion of the chain corresponds to 63–159 (RFSRQFDVEL…SCCTLITPVD (97 aa)). A helical transmembrane segment spans residues 160–180 (LYPTFLDHMIRVTIFVLQWGL). At 181-182 (SY) the chain is on the lumenal side. The chain crosses the membrane as a helical span at residues 183 to 203 (IIMLLFMYYNGYIIISCLIGA). Residues 204–241 (IVGRFIFCYEPLGSLGANGSAQGTVSYDKESDDRKCCL) lie on the Cytoplasmic side of the membrane.

This sequence belongs to the copper transporter (Ctr) (TC 1.A.56) family. SLC31A subfamily.

It is found in the cytoplasmic vesicle membrane. Functionally, required for high affinity copper (probably reduced Cu I) transport into the cell. The sequence is that of Copper transport protein CTR3 (CTR3) from Saccharomyces cerevisiae (strain ATCC 204508 / S288c) (Baker's yeast).